We begin with the raw amino-acid sequence, 259 residues long: Ras-related protein Rab-34 (259 aa).

M1 is subject to N-acetylmethionine. Positions 62, 63, 64, 65, 66, 78, 81, and 84 each coordinate GTP. Position 66 (T66) interacts with Mg(2+). Positions 71–89 (RFCKDTFDKNYKATIGVDF) match the Switch 1 motif. T84 and D107 together coordinate Mg(2+). The Switch 2 motif lies at 108–127 (TAGQERFKCIASTYYRGAQA). Positions 110, 167, 169, and 198 each coordinate GTP. At S241 the chain carries Phosphoserine. Residues C257 and C258 are each lipidated (S-geranylgeranyl cysteine).

The protein belongs to the small GTPase superfamily. Rab family. As to quaternary structure, interacts with RILP. The GTP-bound form interacts with REP15. The cofactor is Mg(2+).

The protein localises to the cytoplasm. It is found in the golgi apparatus. Its subcellular location is the cytoplasmic vesicle. It localises to the phagosome. The protein resides in the phagosome membrane. The protein localises to the cell projection. It is found in the cilium. Its subcellular location is the cytoskeleton. It localises to the microtubule organizing center. The protein resides in the centrosome. The protein localises to the centriole. The catalysed reaction is GTP + H2O = GDP + phosphate + H(+). With respect to regulation, regulated by guanine nucleotide exchange factors (GEFs) which promote the exchange of bound GDP for free GTP. Regulated by GTPase activating proteins (GAPs) which increase the GTP hydrolysis activity. Inhibited by GDP dissociation inhibitors (GDIs). Functionally, the small GTPases Rab are key regulators of intracellular membrane trafficking, from the formation of transport vesicles to their fusion with membranes. Rabs cycle between an inactive GDP-bound form and an active GTP-bound form that is able to recruit to membranes different sets of downstream effectors directly responsible for vesicle formation, movement, tethering and fusion. RAB34 transports protein involved in the redistribution of lysosomes to the peri-Golgi region. Plays a role in the maturation of phagosomes that engulf pathogens, such as S.aureus and M.tuberculosis. Plays a role in the fusion of phagosomes with lysosomes. Required for the early steps of intracellular ciliogenesis, the cilium assembly pathway initiated by trafficking and docking of ciliary vesicles to the centrioles in the cytoplasm, followed by axoneme formation in the cytoplasm. After axoneme elongation, the centrioles migrate close to the cell surface so that ciliary vesicles can fuse with the plasma membrane to expose cilia to the extracellular space. It seems dispensable for ciliogenesis via the extracellular pathway where cilium assembly begins after migration and docking of the centriole to the plasma membrane. Also acts as a positive regulator of hedgehog signaling and regulates ciliary function. The sequence is that of Ras-related protein Rab-34 from Mus musculus (Mouse).